The chain runs to 357 residues: 3-isopropylmalate dehydrogenase (357 aa).

76–89 lines the NAD(+) pocket; sequence GYQWESLDISVRPE. Positions 96, 106, 134, and 224 each coordinate substrate. Mg(2+) is bound by residues Asp224, Asp248, and Asp252. Position 282-294 (282-294) interacts with NAD(+); sequence GSAPDIAGQNIAN.

Belongs to the isocitrate and isopropylmalate dehydrogenases family. LeuB type 1 subfamily. As to quaternary structure, homodimer. The cofactor is Mg(2+). Requires Mn(2+) as cofactor.

The protein localises to the cytoplasm. It catalyses the reaction (2R,3S)-3-isopropylmalate + NAD(+) = 4-methyl-2-oxopentanoate + CO2 + NADH. It participates in amino-acid biosynthesis; L-leucine biosynthesis; L-leucine from 3-methyl-2-oxobutanoate: step 3/4. Functionally, catalyzes the oxidation of 3-carboxy-2-hydroxy-4-methylpentanoate (3-isopropylmalate) to 3-carboxy-4-methyl-2-oxopentanoate. The product decarboxylates to 4-methyl-2 oxopentanoate. This Hydrogenovibrio crunogenus (strain DSM 25203 / XCL-2) (Thiomicrospira crunogena) protein is 3-isopropylmalate dehydrogenase.